The following is a 320-amino-acid chain: Phosphatidylserine decarboxylase proenzyme (320 aa).

Residues Asp90, His147, and Ser254 each act as charge relay system; for autoendoproteolytic cleavage activity in the active site. The active-site Schiff-base intermediate with substrate; via pyruvic acid; for decarboxylase activity is the Ser254. At Ser254 the chain carries Pyruvic acid (Ser); by autocatalysis. The disordered stretch occupies residues 288–320 (EASTAAEPAPLPEEEIRAEHRASPLVDDTQDQG).

This sequence belongs to the phosphatidylserine decarboxylase family. PSD-B subfamily. Prokaryotic type I sub-subfamily. In terms of assembly, heterodimer of a large membrane-associated beta subunit and a small pyruvoyl-containing alpha subunit. Pyruvate serves as cofactor. Post-translationally, is synthesized initially as an inactive proenzyme. Formation of the active enzyme involves a self-maturation process in which the active site pyruvoyl group is generated from an internal serine residue via an autocatalytic post-translational modification. Two non-identical subunits are generated from the proenzyme in this reaction, and the pyruvate is formed at the N-terminus of the alpha chain, which is derived from the carboxyl end of the proenzyme. The autoendoproteolytic cleavage occurs by a canonical serine protease mechanism, in which the side chain hydroxyl group of the serine supplies its oxygen atom to form the C-terminus of the beta chain, while the remainder of the serine residue undergoes an oxidative deamination to produce ammonia and the pyruvoyl prosthetic group on the alpha chain. During this reaction, the Ser that is part of the protease active site of the proenzyme becomes the pyruvoyl prosthetic group, which constitutes an essential element of the active site of the mature decarboxylase.

It localises to the cell membrane. The catalysed reaction is a 1,2-diacyl-sn-glycero-3-phospho-L-serine + H(+) = a 1,2-diacyl-sn-glycero-3-phosphoethanolamine + CO2. Its pathway is phospholipid metabolism; phosphatidylethanolamine biosynthesis; phosphatidylethanolamine from CDP-diacylglycerol: step 2/2. Its function is as follows. Catalyzes the formation of phosphatidylethanolamine (PtdEtn) from phosphatidylserine (PtdSer). In Klebsiella pneumoniae (strain 342), this protein is Phosphatidylserine decarboxylase proenzyme.